The chain runs to 641 residues: MYNEQVNSGKSIKEKERYLDALLKILKDNPVTLKEIGWDLPKGLLQFFSRKNINVNIHLVFSPLVSSVMECFNELAINGNPKECLLTACELVSTLHIVLTETGDSDEENEDLNDSNRNDASNITDELSVITPEIGHYMAKNTVEFIPNLKIYVLFEFMSLLLKRVDTLYPSKFLAMVTSAIIKYVTTNVQAMDDPHFILRIVYNFCTNYSPAQPSASLTDGISTNDLEKIHDDESALQKKLLANLSVFVISNCLKNHPGNIDKIYFKTLMHKKTDENEIDASVLQICHQYYEYVTSLDVHMKELLEKCLVESRSIYNSLLMNPAASTPEFKEEINQLVYEVSYAYQIKKLADEKNLELDQYGVVILSAIHYSKNGTHLLPQIDIQSAIYLYLRCTTASLFSEIYENKFLESSVRYWLWVSTTETSTEKIKCALQELPGHITTAFLQMLLMKTCNESNNDTKLTEITLLRRLLYLMPESTSFTFIFETLLHCPYITAKIAVLDILRDMMIRSPEAANRDETVGLIEQQNPGNTANSVPIMPTLPPRPYITINEDRMASIHSIALICFSAAKQKKRTQGDLLLVLTYMKFFVSLRNKWDLGLLTLINKEISESFQGEGEPELAFINISNNTLGEYIEEMNIRS.

This sequence belongs to the YBP1 family.

Its subcellular location is the cytoplasm. Functionally, involved in oxidative stress response and redox homeostasis. Required for hydrogen peroxide-induced activation of YAP1. Acts in a parallele pathway to YBP1. In Saccharomyces cerevisiae (strain ATCC 204508 / S288c) (Baker's yeast), this protein is YAP1-binding protein 2.